We begin with the raw amino-acid sequence, 182 residues long: Ribosome-recycling factor (182 aa).

This sequence belongs to the RRF family.

Its subcellular location is the cytoplasm. Responsible for the release of ribosomes from messenger RNA at the termination of protein biosynthesis. May increase the efficiency of translation by recycling ribosomes from one round of translation to another. This Prochlorococcus marinus (strain SARG / CCMP1375 / SS120) protein is Ribosome-recycling factor.